Reading from the N-terminus, the 228-residue chain is MKLFVAKLGEIDYQDALTMQEKLLLLRQQNKVEDIMLLLQHPPTLTLGTRENRYNILVPEVELKRQGVNIFKSNRGGDVTYHGPGQIVGYPIVDLNGHGKSIREYVHKIEETFIQLLKEEYDLTASRESKYHGVWLGNEKITAIGCAVKRWVTMHGFAFNVNTNLSHFNLINPCGITDRGVTSLQKIFGQPQDMEKVYKQVITYFSRVFDFEPEIIDDKKLNEIVGRE.

The region spanning Asn-30–Pro-213 is the BPL/LPL catalytic domain. Substrate contacts are provided by residues Arg-75–His-82, Ala-143–Gly-145, and Gly-156–Ala-158. The active-site Acyl-thioester intermediate is Cys-174.

It belongs to the LipB family.

The protein localises to the cytoplasm. The catalysed reaction is octanoyl-[ACP] + L-lysyl-[protein] = N(6)-octanoyl-L-lysyl-[protein] + holo-[ACP] + H(+). The protein operates within protein modification; protein lipoylation via endogenous pathway; protein N(6)-(lipoyl)lysine from octanoyl-[acyl-carrier-protein]: step 1/2. Functionally, catalyzes the transfer of endogenously produced octanoic acid from octanoyl-acyl-carrier-protein onto the lipoyl domains of lipoate-dependent enzymes. Lipoyl-ACP can also act as a substrate although octanoyl-ACP is likely to be the physiological substrate. The chain is Octanoyltransferase from Desulforamulus reducens (strain ATCC BAA-1160 / DSM 100696 / MI-1) (Desulfotomaculum reducens).